The following is a 503-amino-acid chain: Trehalose-6-phosphate synthase (503 aa).

Arg22 is a binding site for D-glucose 6-phosphate. 42-43 serves as a coordination point for UDP-alpha-D-glucose; sequence GG. Tyr94 and Asp148 together coordinate D-glucose 6-phosphate. UDP-alpha-D-glucose is bound by residues Arg290 and Lys295. D-glucose 6-phosphate is bound at residue Arg328. Residue 393-397 coordinates UDP-alpha-D-glucose; it reads LVAKE. Residues 481 to 503 are disordered; that stretch reads GETGDSGVTGESTPAPESDSGSF.

It belongs to the glycosyltransferase 20 family. In terms of assembly, homotetramer.

It catalyses the reaction ADP-alpha-D-glucose + D-glucose 6-phosphate = alpha,alpha-trehalose 6-phosphate + ADP + H(+). It carries out the reaction CDP-alpha-D-glucose + D-glucose 6-phosphate = alpha,alpha-trehalose 6-phosphate + CDP + H(+). The enzyme catalyses GDP-alpha-D-glucose + D-glucose 6-phosphate = alpha,alpha-trehalose 6-phosphate + GDP + H(+). The catalysed reaction is TDP-alpha-D-glucose + D-glucose 6-phosphate = 5-methyl-UDP + alpha,alpha-trehalose 6-phosphate + H(+). It catalyses the reaction D-glucose 6-phosphate + UDP-alpha-D-glucose = alpha,alpha-trehalose 6-phosphate + UDP + H(+). It functions in the pathway glycan biosynthesis; trehalose biosynthesis. Stimulated by the polynucleotide FII (physiological activator), and by chondroitin sulfate (CS) and heparin. Activation by the polyanion is inhibited by high salt concentration as well as by high concentrations of mononucleoside phosphates. In terms of biological role, involved in the production of glycogen and alpha-glucan via the TreS-Pep2 branch involved in the biosynthesis of maltose-1-phosphate (M1P), and probably in the osmoprotection via the biosynthesis of trehalose. Catalyzes the transfer of glucose from UDP-glucose (UDP-Glc) to glucose-6-phosphate (Glc-6-P) to form trehalose-6-phosphate. ADP-Glc, CDP-Glc, GDP-Glc and TDP-Glc are also glucosyl donors, however, when the pyrimidine sugar nucleotides (CDP-Glc, TDP-Glc and UDP-Glc) are used as substrates, there is an absolute requirement for a high molecular weight polyanion for activity. In Mycolicibacterium smegmatis (strain ATCC 700084 / mc(2)155) (Mycobacterium smegmatis), this protein is Trehalose-6-phosphate synthase.